Consider the following 971-residue polypeptide: UPF0182 protein CMS1887 (971 aa).

Helical transmembrane passes span 16 to 36 (LAIT…FAGF), 56 to 76 (WGAG…PVFV), 108 to 128 (LAMF…ASSG), 161 to 181 (FYHA…LGVL), 205 to 225 (IQIA…IWLD), 255 to 275 (TILA…AAIG), and 281 to 301 (IIGT…YPAI). Residues 687 to 702 (QDLWTTPNDPTATTEA) show a composition bias toward polar residues. Disordered regions lie at residues 687-706 (QDLW…GTPA) and 874-924 (GATA…AQDV). Low complexity-rich tracts occupy residues 884–900 (PTTP…TDGA) and 907–921 (STPT…AAPA).

It belongs to the UPF0182 family.

It localises to the cell membrane. The protein is UPF0182 protein CMS1887 of Clavibacter sepedonicus (Clavibacter michiganensis subsp. sepedonicus).